Reading from the N-terminus, the 93-residue chain is Corticostatin 1 (93 aa).

The signal sequence occupies residues 1–19 (MRTLILLAAILLAALQAQA). The propeptide occupies 20–59 (ELFSVNVDEVLDQQQPGSDQDLVIHLTGEESSALQVPDTK). 3 cysteine pairs are disulfide-bonded: Cys-62–Cys-90, Cys-64–Cys-79, and Cys-69–Cys-89.

The protein belongs to the alpha-defensin family.

It is found in the secreted. In terms of biological role, microbicidal activity and inhibits corticotropin (ACTH) stimulated corticosterone production. This Oryctolagus cuniculus (Rabbit) protein is Corticostatin 1.